We begin with the raw amino-acid sequence, 403 residues long: D-mannonate dehydratase Caul1427 (403 aa).

The substrate site is built by Asn38 and His123. The active-site Proton donor/acceptor is Tyr160. Asp211 is a binding site for Mg(2+). His213 acts as the Proton donor/acceptor in catalysis. Glu237 and Glu263 together coordinate Mg(2+). Residues Glu263, Arg284, His313, Asp317, and Glu340 each contribute to the substrate site.

Belongs to the mandelate racemase/muconate lactonizing enzyme family. GalD subfamily. Mg(2+) serves as cofactor.

The enzyme catalyses D-mannonate = 2-dehydro-3-deoxy-D-gluconate + H2O. It functions in the pathway carbohydrate metabolism; pentose and glucuronate interconversion. In terms of biological role, catalyzes the dehydration of D-mannonate. Has no detectable activity with a panel of 70 other acid sugars (in vitro). The protein is D-mannonate dehydratase Caul1427 of Caulobacter sp. (strain K31).